The sequence spans 428 residues: Histidine--tRNA ligase (428 aa).

The protein belongs to the class-II aminoacyl-tRNA synthetase family. As to quaternary structure, homodimer.

Its subcellular location is the cytoplasm. The catalysed reaction is tRNA(His) + L-histidine + ATP = L-histidyl-tRNA(His) + AMP + diphosphate + H(+). The polypeptide is Histidine--tRNA ligase (Sorangium cellulosum (strain So ce56) (Polyangium cellulosum (strain So ce56))).